A 372-amino-acid polypeptide reads, in one-letter code: Queuine tRNA-ribosyltransferase (372 aa).

The Proton acceptor role is filled by Asp-89. Substrate is bound by residues 89 to 93 (DSGGF), Asp-143, Gln-185, and Gly-212. Residues 243–249 (GVGKPED) are RNA binding. Asp-262 functions as the Nucleophile in the catalytic mechanism. Residues 267 to 271 (TRNAR) are RNA binding; important for wobble base 34 recognition. 4 residues coordinate Zn(2+): Cys-300, Cys-302, Cys-305, and His-331.

The protein belongs to the queuine tRNA-ribosyltransferase family. As to quaternary structure, homodimer. Within each dimer, one monomer is responsible for RNA recognition and catalysis, while the other monomer binds to the replacement base PreQ1. The cofactor is Zn(2+).

The catalysed reaction is 7-aminomethyl-7-carbaguanine + guanosine(34) in tRNA = 7-aminomethyl-7-carbaguanosine(34) in tRNA + guanine. It functions in the pathway tRNA modification; tRNA-queuosine biosynthesis. In terms of biological role, catalyzes the base-exchange of a guanine (G) residue with the queuine precursor 7-aminomethyl-7-deazaguanine (PreQ1) at position 34 (anticodon wobble position) in tRNAs with GU(N) anticodons (tRNA-Asp, -Asn, -His and -Tyr). Catalysis occurs through a double-displacement mechanism. The nucleophile active site attacks the C1' of nucleotide 34 to detach the guanine base from the RNA, forming a covalent enzyme-RNA intermediate. The proton acceptor active site deprotonates the incoming PreQ1, allowing a nucleophilic attack on the C1' of the ribose to form the product. After dissociation, two additional enzymatic reactions on the tRNA convert PreQ1 to queuine (Q), resulting in the hypermodified nucleoside queuosine (7-(((4,5-cis-dihydroxy-2-cyclopenten-1-yl)amino)methyl)-7-deazaguanosine). This is Queuine tRNA-ribosyltransferase from Chromohalobacter salexigens (strain ATCC BAA-138 / DSM 3043 / CIP 106854 / NCIMB 13768 / 1H11).